The chain runs to 368 residues: Geranylgeranyl pyrophosphate synthase dpfgD (368 aa).

Lys-48, Arg-51, and His-80 together coordinate isopentenyl diphosphate. Asp-87 and Asp-91 together coordinate Mg(2+). Position 96 (Arg-96) interacts with dimethylallyl diphosphate. Residue Arg-97 coordinates isopentenyl diphosphate. Dimethylallyl diphosphate is bound by residues Lys-174, Thr-175, and Gln-208. Asp-211 contributes to the Mg(2+) binding site. Dimethylallyl diphosphate contacts are provided by Asn-215, Lys-225, and Lys-235.

This sequence belongs to the FPP/GGPP synthase family. Mg(2+) serves as cofactor.

The enzyme catalyses isopentenyl diphosphate + dimethylallyl diphosphate = (2E)-geranyl diphosphate + diphosphate. The catalysed reaction is isopentenyl diphosphate + (2E)-geranyl diphosphate = (2E,6E)-farnesyl diphosphate + diphosphate. It catalyses the reaction isopentenyl diphosphate + (2E,6E)-farnesyl diphosphate = (2E,6E,10E)-geranylgeranyl diphosphate + diphosphate. The protein operates within secondary metabolite biosynthesis; terpenoid biosynthesis. Functionally, geranylgeranyl pyrophosphate synthase; part of the gene cluster that mediates the biosynthesis of diterpenoid pyrones. The first step of the pathway is the synthesis of the alpha-pyrone moiety by the polyketide synthase dpfgA via condensation of one acetyl-CoA starter unit with 3 malonyl-CoA units and 2 methylations. The alpha-pyrone is then combined with geranylgeranyl pyrophosphate (GGPP) formed by the GGPP synthase dpfgD through the action of the prenyltransferase dpfgC to yield a linear alpha-pyrone diterpenoid. Subsequent steps in the diterpenoid pyrone biosynthetic pathway involve the decalin core formation, which is initiated by the epoxidation of the C10-C11 olefin by the FAD-dependent oxidoreductase dpfgE, and is followed by a cyclization cascade catalyzed by the terpene cyclase dpfgB. The short chain dehydrogenase/reductase dpfgG then oxidizes the 8S hydroxy group to a ketone and the short chain dehydrogenase/reductase dpfgH reduces the ketone to the 8R hydroxy group to yield higginsianin B. Higginsianin B is further methylated by the methyltransferase dpfgI to produce the intermediate named FDDP B. The cytochrome P450 monooxygenase dfgpJ then catalyzes a three-step oxidation at C-27 to generate a carboxylic acid as well as C-26 hydroxylation. Finally, methyltransferase dpfgK methylates the carboxylic acid generated by dpfgJ, yielding the final diterpenoid pyrones from the pathway which were named FDDP D and FDDP E. The chain is Geranylgeranyl pyrophosphate synthase dpfgD from Gibberella zeae (strain ATCC MYA-4620 / CBS 123657 / FGSC 9075 / NRRL 31084 / PH-1) (Wheat head blight fungus).